The following is a 146-amino-acid chain: Large ribosomal subunit protein uL15 (146 aa).

Basic and acidic residues predominate over residues 1-13; sequence MKLHELHSAEGSR. The segment at 1 to 55 is disordered; that stretch reads MKLHELHSAEGSRRNRKRVGRGTSSGYGKTSGRGQKGQLARQGGHTRLGFEGGQM. A compositionally biased stretch (gly residues) spans 23–35; sequence TSSGYGKTSGRGQ.

Belongs to the universal ribosomal protein uL15 family. Part of the 50S ribosomal subunit.

Binds to the 23S rRNA. This is Large ribosomal subunit protein uL15 from Lactobacillus acidophilus (strain ATCC 700396 / NCK56 / N2 / NCFM).